Here is an 852-residue protein sequence, read N- to C-terminus: Serine/threonine-protein phosphatase 6 regulatory subunit 3-A (852 aa).

3 disordered regions span residues 610–653 (NIAF…VNHE), 714–742 (NTKE…VNAS), and 817–852 (DSAM…NGPV). The span at 627 to 638 (DSEESTDSEEEE) shows a compositional bias: acidic residues. Positions 714-732 (NTKETIRSSSPVEMETSTE) are enriched in polar residues. Low complexity predominate over residues 828–840 (PSSSSQEQRTSEQ).

Belongs to the SAPS family.

Its function is as follows. Regulatory subunit of protein phosphatase 6 (PP6). May function as a scaffolding PP6 subunit. This Xenopus laevis (African clawed frog) protein is Serine/threonine-protein phosphatase 6 regulatory subunit 3-A (ppp6r3-a).